A 200-amino-acid chain; its full sequence is Transcription factor FapR (200 aa).

It belongs to the FapR family.

Transcriptional factor involved in regulation of membrane lipid biosynthesis by repressing genes involved in fatty acid and phospholipid metabolism. The chain is Transcription factor FapR from Thermoanaerobacter pseudethanolicus (strain ATCC 33223 / 39E) (Clostridium thermohydrosulfuricum).